A 370-amino-acid polypeptide reads, in one-letter code: Holliday junction branch migration complex subunit RuvB 2 (370 aa).

The interval 1–54 is disordered; the sequence is MAIISSRAAGAEDPGQRQQKSSARRRESKLAFARAEGLLQPQAHPSEAQEESLR. The tract at residues 13–214 is large ATPase domain (RuvB-L); sequence DPGQRQQKSS…FGQVQRLRFY (202 aa). ATP is bound by residues Leu53, Arg54, Gly95, Lys98, Thr99, Thr100, 161 to 163, Arg204, Tyr214, and Arg251; that span reads EDF. Position 99 (Thr99) interacts with Mg(2+). The small ATPAse domain (RuvB-S) stretch occupies residues 215–285; that stretch reads EPHELAEIVL…VAAAALELFQ (71 aa). A head domain (RuvB-H) region spans residues 288-370; sequence PMGLDWTDRK…TAQSPLPVWS (83 aa). Positions 343 and 348 each coordinate DNA.

It belongs to the RuvB family. As to quaternary structure, homohexamer. Forms an RuvA(8)-RuvB(12)-Holliday junction (HJ) complex. HJ DNA is sandwiched between 2 RuvA tetramers; dsDNA enters through RuvA and exits via RuvB. An RuvB hexamer assembles on each DNA strand where it exits the tetramer. Each RuvB hexamer is contacted by two RuvA subunits (via domain III) on 2 adjacent RuvB subunits; this complex drives branch migration. In the full resolvosome a probable DNA-RuvA(4)-RuvB(12)-RuvC(2) complex forms which resolves the HJ.

It localises to the cytoplasm. It carries out the reaction ATP + H2O = ADP + phosphate + H(+). In terms of biological role, the RuvA-RuvB-RuvC complex processes Holliday junction (HJ) DNA during genetic recombination and DNA repair, while the RuvA-RuvB complex plays an important role in the rescue of blocked DNA replication forks via replication fork reversal (RFR). RuvA specifically binds to HJ cruciform DNA, conferring on it an open structure. The RuvB hexamer acts as an ATP-dependent pump, pulling dsDNA into and through the RuvAB complex. RuvB forms 2 homohexamers on either side of HJ DNA bound by 1 or 2 RuvA tetramers; 4 subunits per hexamer contact DNA at a time. Coordinated motions by a converter formed by DNA-disengaged RuvB subunits stimulates ATP hydrolysis and nucleotide exchange. Immobilization of the converter enables RuvB to convert the ATP-contained energy into a lever motion, pulling 2 nucleotides of DNA out of the RuvA tetramer per ATP hydrolyzed, thus driving DNA branch migration. The RuvB motors rotate together with the DNA substrate, which together with the progressing nucleotide cycle form the mechanistic basis for DNA recombination by continuous HJ branch migration. Branch migration allows RuvC to scan DNA until it finds its consensus sequence, where it cleaves and resolves cruciform DNA. The sequence is that of Holliday junction branch migration complex subunit RuvB 2 from Synechococcus sp. (strain JA-3-3Ab) (Cyanobacteria bacterium Yellowstone A-Prime).